Consider the following 432-residue polypeptide: Putative transferase At1g60990, chloroplastic (432 aa).

The N-terminal 57 residues, 1 to 57 (MNLLQSCKDMAMMMRIDSVSHITNTALLPCLYNGTVLRRRSLSLRKCGFRERKFQLR), are a transit peptide targeting the chloroplast.

The protein belongs to the GcvT family. As to expression, expressed in young leaves (at protein level).

The protein resides in the plastid. The protein localises to the chloroplast. Folate-dependent protein involved in Fe/S cluster biogenesis. Functionally complements an E.coli mutant defective in ygfZ. This is Putative transferase At1g60990, chloroplastic from Arabidopsis thaliana (Mouse-ear cress).